Reading from the N-terminus, the 508-residue chain is Maturase K (508 aa).

Belongs to the intron maturase 2 family. MatK subfamily.

It is found in the plastid. It localises to the chloroplast. In terms of biological role, usually encoded in the trnK tRNA gene intron. Probably assists in splicing its own and other chloroplast group II introns. This is Maturase K from Ranunculus glacialis (Glacier buttercup).